A 572-amino-acid polypeptide reads, in one-letter code: DNA polymerase (572 aa).

The 3'-5' exonuclease and strand displacement activities stretch occupies residues 1–222 (MSRKMFSCDF…LPMDKEIRKA (222 aa)). Positions 56–66 (YFHNLKFDGAF) are interaction with the primer terminal protein. Mg(2+) contacts are provided by Asp142 and Asp166. Residues 223–226 (YRGG) are DNA-binding; Involved in the formation of a stable complex between TP and phi29 DNA polymerase. The segment at 227-572 (FTWLNDKYKE…VLVDSVFTIK (346 aa)) is initiation, polymerization and pyrophosphorolytic activities. Mg(2+)-binding residues include Asp246 and Val247. 5-methyl-UTP contacts are provided by Tyr251, Lys368, and Lys380. Asp453 and Asp455 together coordinate Mg(2+). Asp455 is a binding site for 5-methyl-UTP.

This sequence belongs to the DNA polymerase type-B family. As to quaternary structure, interacts with the primer terminal protein; this interaction allows the initiation of TP-primed DNA replication at both viral DNA ends. Interacts with DNA. Mg(2+) is required as a cofactor.

It catalyses the reaction DNA(n) + a 2'-deoxyribonucleoside 5'-triphosphate = DNA(n+1) + diphosphate. In terms of biological role, polymerase responsible for protein-primed viral DNA replication by strand displacement with high processivity and fidelity. To start replication, the DNA polymerase forms a heterodimer with a free primer terminal protein (TP), recognizes the replication origins at both 5' ends of the linear chromosome, and initiates replication using as primer the OH-group of Ser-232 of the TP. This polymerase possesses three enzymatic activities: DNA synthesis (polymerase), primer terminal protein (TP) deoxynucleotidylation, which is the formation of a covalent linkage (phosphoester) between the hydroxyl group of a specific serine residue in TP and 5'-dAMP, a reaction directed by the second T at the 3' end, and 3' to 5' exonuclease activity. Exonuclease activity has a proofreading purpose. The chain is DNA polymerase (G) from Bacillus phage M2 (Bacteriophage M2).